The following is a 118-amino-acid chain: Small ribosomal subunit protein uS13 (118 aa).

The segment at 94–118 (GLPLRGQRTRTNARTRKGPRRPIRK) is disordered.

The protein belongs to the universal ribosomal protein uS13 family. As to quaternary structure, part of the 30S ribosomal subunit. Forms a loose heterodimer with protein S19. Forms two bridges to the 50S subunit in the 70S ribosome.

Functionally, located at the top of the head of the 30S subunit, it contacts several helices of the 16S rRNA. In the 70S ribosome it contacts the 23S rRNA (bridge B1a) and protein L5 of the 50S subunit (bridge B1b), connecting the 2 subunits; these bridges are implicated in subunit movement. Contacts the tRNAs in the A and P-sites. The chain is Small ribosomal subunit protein uS13 from Thioalkalivibrio sulfidiphilus (strain HL-EbGR7).